Consider the following 332-residue polypeptide: Probable allantoicase (332 aa).

It belongs to the allantoicase family.

It carries out the reaction allantoate + H2O = (S)-ureidoglycolate + urea. The protein operates within nitrogen metabolism; (S)-allantoin degradation; (S)-ureidoglycolate from allantoate (aminidohydrolase route): step 1/1. The polypeptide is Probable allantoicase (Pseudomonas aeruginosa (strain LESB58)).